The primary structure comprises 79 residues: Large ribosomal subunit protein bL31c (79 aa).

This sequence belongs to the bacterial ribosomal protein bL31 family. Type A subfamily. As to quaternary structure, part of the 50S ribosomal subunit.

It localises to the plastid. The protein resides in the chloroplast. Functionally, binds the 23S rRNA. The protein is Large ribosomal subunit protein bL31c of Gracilaria tenuistipitata var. liui (Red alga).